The sequence spans 81 residues: Cytochrome b559 subunit alpha (81 aa).

Residues 21-35 (VIHSITIPMLFIAGW) traverse the membrane as a helical segment. His-23 lines the heme pocket.

This sequence belongs to the PsbE/PsbF family. As to quaternary structure, heterodimer of an alpha subunit and a beta subunit. PSII is composed of 1 copy each of membrane proteins PsbA, PsbB, PsbC, PsbD, PsbE, PsbF, PsbH, PsbI, PsbJ, PsbK, PsbL, PsbM, PsbT, PsbX, PsbY, PsbZ, Psb30/Ycf12, peripheral proteins PsbO, CyanoQ (PsbQ), PsbU, PsbV and a large number of cofactors. It forms dimeric complexes. Heme b is required as a cofactor.

The protein localises to the cellular thylakoid membrane. Its function is as follows. This b-type cytochrome is tightly associated with the reaction center of photosystem II (PSII). PSII is a light-driven water:plastoquinone oxidoreductase that uses light energy to abstract electrons from H(2)O, generating O(2) and a proton gradient subsequently used for ATP formation. It consists of a core antenna complex that captures photons, and an electron transfer chain that converts photonic excitation into a charge separation. In Picosynechococcus sp. (strain ATCC 27264 / PCC 7002 / PR-6) (Agmenellum quadruplicatum), this protein is Cytochrome b559 subunit alpha.